The following is a 261-amino-acid chain: Taurine import ATP-binding protein TauB (261 aa).

Residues 4-233 (LQLERIGAQY…RYAAGESARA (230 aa)) enclose the ABC transporter domain. Position 38 to 45 (38 to 45 (GPSGSGKT)) interacts with ATP.

Belongs to the ABC transporter superfamily. Taurine importer (TC 3.A.1.17.1) family. As to quaternary structure, the complex is composed of two ATP-binding proteins (TauB), two transmembrane proteins (TauC) and a solute-binding protein (TauA).

It localises to the cell inner membrane. It catalyses the reaction taurine(out) + ATP + H2O = taurine(in) + ADP + phosphate + H(+). Functionally, part of the ABC transporter complex TauABC involved in taurine import. Responsible for energy coupling to the transport system. The protein is Taurine import ATP-binding protein TauB of Pseudomonas savastanoi pv. phaseolicola (strain 1448A / Race 6) (Pseudomonas syringae pv. phaseolicola (strain 1448A / Race 6)).